The following is a 316-amino-acid chain: Cytochrome c biogenesis protein CcsA (316 aa).

A run of 8 helical transmembrane segments spans residues 19 to 39, 47 to 67, 77 to 97, 106 to 126, 151 to 171, 224 to 244, 258 to 275, and 285 to 305; these read VLTLGSLAFVLILISLPFSFW, SSIVRILIASANILLAIQLVF, ISNLYESLCFLTWGLTFIQLL, LIQAALTPISLLSIAFASFVL, VIMCSYAALLIGSLLSLVVLL, TITFGFLLLTFGLISGAVWAN, TWAFISWLIYAAYLHTRL, and AIIAIIGLFIILICYIGVNFL.

This sequence belongs to the CcmF/CycK/Ccl1/NrfE/CcsA family. As to quaternary structure, may interact with ccs1.

The protein localises to the cellular thylakoid membrane. Its function is as follows. Required during biogenesis of c-type cytochromes (cytochrome c6 and cytochrome f) at the step of heme attachment. This chain is Cytochrome c biogenesis protein CcsA, found in Prochlorococcus marinus (strain SARG / CCMP1375 / SS120).